We begin with the raw amino-acid sequence, 333 residues long: MKCGSREVFVKLEEGTNPQWGKPPSSRSAEEHIRYSFLILDKPRGPTSHEVAAWVKKILGVERAGHSGTLDPKVSGVLPVAVAEGTKVLMALSRADKVYIAVAKFHGDVDVENLRRVLQELQGEIYQKPPLRSAVKRQLRTRRVYSLELLELDGRYAVLKMHVEAGTYARKLIHDLGEILGVGANMRELRRVAVSCFTEDEAVTLQDLADAYYIWKKYGDDTYLRRVLLPIEEIARPLPKIWVRDSAVDALCNGAPLAAPGVAKFEHPFSRGDLVAYFTLKGELIGIGRALVDSEEVKKMEKGLVARTDRVVMPRGTYPPMWRRGGKSFKSGT.

The active-site Nucleophile is aspartate 71. Residues 238-313 (LPKIWVRDSA…LVARTDRVVM (76 aa)) form the PUA domain.

The protein belongs to the pseudouridine synthase TruB family. Type 2 subfamily.

It catalyses the reaction uridine(55) in tRNA = pseudouridine(55) in tRNA. Functionally, could be responsible for synthesis of pseudouridine from uracil-55 in the psi GC loop of transfer RNAs. In Pyrobaculum calidifontis (strain DSM 21063 / JCM 11548 / VA1), this protein is Probable tRNA pseudouridine synthase B.